The chain runs to 127 residues: Small ribosomal subunit protein uS13 (127 aa).

The span at 95–118 shows a compositional bias: basic residues; it reads GLPVRGQRTHTNARTRKGPKKGLV. The segment at 95-127 is disordered; it reads GLPVRGQRTHTNARTRKGPKKGLVRKAAAPAPK.

This sequence belongs to the universal ribosomal protein uS13 family. Part of the 30S ribosomal subunit. Forms a loose heterodimer with protein S19. Forms two bridges to the 50S subunit in the 70S ribosome.

In terms of biological role, located at the top of the head of the 30S subunit, it contacts several helices of the 16S rRNA. In the 70S ribosome it contacts the 23S rRNA (bridge B1a) and protein L5 of the 50S subunit (bridge B1b), connecting the 2 subunits; these bridges are implicated in subunit movement. Contacts the tRNAs in the A and P-sites. This chain is Small ribosomal subunit protein uS13, found in Anaeromyxobacter sp. (strain Fw109-5).